Here is a 362-residue protein sequence, read N- to C-terminus: Phosphoserine aminotransferase (362 aa).

Residue Arg43 coordinates L-glutamate. Pyridoxal 5'-phosphate-binding positions include 77-78, Trp103, Thr153, Asp173, and Gln196; that span reads AR. Position 197 is an N6-(pyridoxal phosphate)lysine (Lys197).

This sequence belongs to the class-V pyridoxal-phosphate-dependent aminotransferase family. SerC subfamily. As to quaternary structure, homodimer. It depends on pyridoxal 5'-phosphate as a cofactor.

Its subcellular location is the cytoplasm. The enzyme catalyses O-phospho-L-serine + 2-oxoglutarate = 3-phosphooxypyruvate + L-glutamate. It carries out the reaction 4-(phosphooxy)-L-threonine + 2-oxoglutarate = (R)-3-hydroxy-2-oxo-4-phosphooxybutanoate + L-glutamate. The protein operates within amino-acid biosynthesis; L-serine biosynthesis; L-serine from 3-phospho-D-glycerate: step 2/3. Its pathway is cofactor biosynthesis; pyridoxine 5'-phosphate biosynthesis; pyridoxine 5'-phosphate from D-erythrose 4-phosphate: step 3/5. Its function is as follows. Catalyzes the reversible conversion of 3-phosphohydroxypyruvate to phosphoserine and of 3-hydroxy-2-oxo-4-phosphonooxybutanoate to phosphohydroxythreonine. The protein is Phosphoserine aminotransferase of Legionella pneumophila (strain Lens).